Reading from the N-terminus, the 180-residue chain is Large ribosomal subunit protein uL18m (180 aa).

This sequence belongs to the universal ribosomal protein uL18 family. In terms of assembly, component of the mitochondrial ribosome large subunit (39S) which comprises a 16S rRNA and about 50 distinct proteins.

It is found in the mitochondrion. Together with thiosulfate sulfurtransferase (TST), acts as a mitochondrial import factor for the cytosolic 5S rRNA. The precursor form shows RNA chaperone activity; is able to fold the 5S rRNA into an import-competent conformation that is recognized by rhodanese (TST). Both the cytoplasmic and mitochondrial forms are able to bind to the helix IV-loop D in the gamma domain of the 5S rRNA. In Bos taurus (Bovine), this protein is Large ribosomal subunit protein uL18m (MRPL18).